We begin with the raw amino-acid sequence, 436 residues long: Methylenetetrahydrofolate--tRNA-(uracil-5-)-methyltransferase TrmFO (436 aa).

An FAD-binding site is contributed by 7 to 12 (GAGLAG).

The protein belongs to the MnmG family. TrmFO subfamily. The cofactor is FAD.

Its subcellular location is the cytoplasm. It catalyses the reaction uridine(54) in tRNA + (6R)-5,10-methylene-5,6,7,8-tetrahydrofolate + NADH + H(+) = 5-methyluridine(54) in tRNA + (6S)-5,6,7,8-tetrahydrofolate + NAD(+). It carries out the reaction uridine(54) in tRNA + (6R)-5,10-methylene-5,6,7,8-tetrahydrofolate + NADPH + H(+) = 5-methyluridine(54) in tRNA + (6S)-5,6,7,8-tetrahydrofolate + NADP(+). In terms of biological role, catalyzes the folate-dependent formation of 5-methyl-uridine at position 54 (M-5-U54) in all tRNAs. The chain is Methylenetetrahydrofolate--tRNA-(uracil-5-)-methyltransferase TrmFO from Caldicellulosiruptor bescii (strain ATCC BAA-1888 / DSM 6725 / KCTC 15123 / Z-1320) (Anaerocellum thermophilum).